We begin with the raw amino-acid sequence, 360 residues long: Replication-associated protein (360 aa).

A CRESS-DNA virus Rep endonuclease domain is found at 11-114 (SHRNANTFLT…PLAVFERGTF (104 aa)). Residues 18-21 (FLTY) carry the RCR-1 motif. A divalent metal cation is bound by residues Glu-52, His-60, and His-62. The RCR-2 signature appears at 60-62 (HLH). Tyr-100 serves as the catalytic For DNA cleavage activity. Positions 100 to 103 (YILK) match the RCR-3 motif. Glu-104 is a binding site for a divalent metal cation. Residues 175–187 (SANKLFPEIQEEF) are oligomerization. 229 to 236 (GPTRTGKS) serves as a coordination point for ATP. Residues 252 to 270 (VDWSSYNEDAIYNIVDDIP) form a transactivation region. The Nuclear localization signal signature appears at 292–303 (KYGKKKKVQKKS).

It belongs to the geminiviridae Rep protein family. In terms of assembly, homooligomer. Rep binds to repeated DNA motifs (iterons). Forms the O-complex, which is a Rep-DNA complex involved in the initiation of RCR. Part of the C- and V-complexes which are RepA-Rep-DNA complexes involved in the c-sense and v-sense transcription. The cofactor is Mg(2+). Mn(2+) is required as a cofactor.

It localises to the host nucleus. Functionally, essential for the replication of viral ssDNA. The closed circular ssDNA genome is first converted to a superhelical dsDNA. Rep binds a specific region at the genome origin of replication. It introduces an endonucleolytic nick within the conserved sequence 5'-TAATATTAC-3' in the intergenic region of the genome present in all geminiviruses, thereby initiating the rolling circle replication (RCR). Following cleavage, binds covalently to the 5'-phosphate of DNA as a tyrosyl ester. The cleavage gives rise to a free 3'-OH that serves as a primer for the cellular DNA polymerase. The polymerase synthesizes the (+) strand DNA by rolling circle mechanism. After one round of replication, a Rep-catalyzed nucleotidyl transfer reaction releases a circular single-stranded virus genome, thereby terminating the replication. Displays origin-specific DNA cleavage, nucleotidyl transferase, ATPase and helicase activities. Acts as an inhibitor of C-sense gene transcription. The protein is Replication-associated protein of Maize streak virus genotype A (isolate Nigeria) (MSV).